The primary structure comprises 303 residues: MSSARFDSSDRSAWYMGPVSRQEAQTRLQGQRHGMFLVRDSSTCPGDYVLSVSENSRVSHYIINSLPNRRFKIGDQEFDHLPALLEFYKIHYLDTTTLIEPAPRYPNPPMGSVSAPNLSTAEENLEYVRTLYDFPGNDAEDLPFKKGELLVIIEKPEEQWWSARNKDGRVGMIPVPYVEKLVRSSPHGKHGNRNSNSYGIPEPAHAYAQPQTTTPLPTVASTPGAAINPLPSTQNGPVFAKAIQKRVPCAYDKTALALEVGDIVKVTRMNINGQWEGEVNGRKGLFPFTHVKIFDPQNPDDNE.

An SH2 domain is found at 14–102; that stretch reads WYMGPVSRQE…LDTTTLIEPA (89 aa). The region spanning 123-183 is the SH3 1 domain; the sequence is ENLEYVRTLY…PVPYVEKLVR (61 aa). Tyr127 bears the Phosphotyrosine mark. The segment at 184-204 is disordered; it reads SSPHGKHGNRNSNSYGIPEPA. Tyr207 carries the phosphotyrosine modification. One can recognise an SH3 2 domain in the interval 235-296; that stretch reads NGPVFAKAIQ…PFTHVKIFDP (62 aa).

This sequence belongs to the CRK family. As to quaternary structure, interacts with INPP5D/SHIP1. Interacts with DOCK2 and EPOR. Interacts with phosphorylated CBLB and IRS4. Interacts with BCAR1/CAS and NEDD9/HEF1.

Functionally, may mediate the transduction of intracellular signals. This Rattus norvegicus (Rat) protein is Crk-like protein.